The chain runs to 386 residues: Innexin unc-9 (386 aa).

The next 4 helical transmembrane spans lie at 33 to 53 (TAII…GFPI), 103 to 123 (QWVP…TIVW), 197 to 217 (FLYI…IFLL), and 282 to 302 (IFLF…CSLF).

Belongs to the pannexin family. In terms of assembly, heterooligomer of unc-7 and unc-9. Interacts with F-actin. As to expression, expressed in PLM neurons (at protein level). Expressed in the nerve ring.

It localises to the cell membrane. The protein resides in the cell junction. The protein localises to the gap junction. Its function is as follows. Structural component of gap junctions. Plays a role in maintaining gap junction activity to promote locomotion. In Caenorhabditis elegans, this protein is Innexin unc-9.